The sequence spans 217 residues: Adenylate kinase (217 aa).

Gly10 to Thr15 contacts ATP. Positions Ser30–Val59 are NMP. AMP contacts are provided by residues Thr31, Arg36, Gly57–Val59, Gly85–Arg88, and Gln92. The interval Gly122–Asp159 is LID. ATP-binding positions include Arg123 and Val132–Tyr133. Residues Arg156 and Arg167 each contribute to the AMP site. ATP is bound at residue Arg202.

This sequence belongs to the adenylate kinase family. As to quaternary structure, monomer.

Its subcellular location is the cytoplasm. It catalyses the reaction AMP + ATP = 2 ADP. The protein operates within purine metabolism; AMP biosynthesis via salvage pathway; AMP from ADP: step 1/1. In terms of biological role, catalyzes the reversible transfer of the terminal phosphate group between ATP and AMP. Plays an important role in cellular energy homeostasis and in adenine nucleotide metabolism. This chain is Adenylate kinase, found in Acinetobacter baumannii (strain AB307-0294).